Here is a 484-residue protein sequence, read N- to C-terminus: UDP-N-acetylmuramate--L-alanine ligase (484 aa).

126 to 132 (GTHGKTT) contacts ATP.

Belongs to the MurCDEF family.

The protein resides in the cytoplasm. The enzyme catalyses UDP-N-acetyl-alpha-D-muramate + L-alanine + ATP = UDP-N-acetyl-alpha-D-muramoyl-L-alanine + ADP + phosphate + H(+). It functions in the pathway cell wall biogenesis; peptidoglycan biosynthesis. In terms of biological role, cell wall formation. This is UDP-N-acetylmuramate--L-alanine ligase from Tolumonas auensis (strain DSM 9187 / NBRC 110442 / TA 4).